A 416-amino-acid polypeptide reads, in one-letter code: Chorismate synthase (416 aa).

Residues Arg-40 and Arg-46 each coordinate NADP(+). Residues 135-137 (RAS), 256-257 (QA), Gly-300, 315-319 (KPIAT), and Arg-341 contribute to the FMN site.

The protein belongs to the chorismate synthase family. As to quaternary structure, homotetramer. The cofactor is FMNH2.

The enzyme catalyses 5-O-(1-carboxyvinyl)-3-phosphoshikimate = chorismate + phosphate. Its pathway is metabolic intermediate biosynthesis; chorismate biosynthesis; chorismate from D-erythrose 4-phosphate and phosphoenolpyruvate: step 7/7. Functionally, catalyzes the anti-1,4-elimination of the C-3 phosphate and the C-6 proR hydrogen from 5-enolpyruvylshikimate-3-phosphate (EPSP) to yield chorismate, which is the branch point compound that serves as the starting substrate for the three terminal pathways of aromatic amino acid biosynthesis. This reaction introduces a second double bond into the aromatic ring system. This is Chorismate synthase from Kocuria rhizophila (strain ATCC 9341 / DSM 348 / NBRC 103217 / DC2201).